The following is a 335-amino-acid chain: Teichoic acids export ATP-binding protein TagH (335 aa).

An ABC transporter domain is found at Ile26 to Lys246. Gly60–Ser67 contributes to the ATP binding site.

It belongs to the ABC transporter superfamily. Teichoic acids exporter (TC 3.A.1.104.1) family. The complex is composed of two ATP-binding proteins (TagH) and two transmembrane proteins (TagG).

It localises to the cell membrane. The enzyme catalyses ATP + H2O + teichoic acidSide 1 = ADP + phosphate + teichoic acidSide 2.. Part of the ABC transporter complex TagGH involved in teichoic acids export. Responsible for energy coupling to the transport system. In Listeria innocua serovar 6a (strain ATCC BAA-680 / CLIP 11262), this protein is Teichoic acids export ATP-binding protein TagH.